We begin with the raw amino-acid sequence, 230 residues long: Cytochrome c-552 (230 aa).

A signal peptide spans 1 to 47 (MTTYLSQDRLRNKENDTMTYQHSKMYQSRTFLLFSALLLVAGQASAA). Heme c-binding residues include Cys-63, Cys-66, His-67, Cys-166, Cys-169, and His-170.

Post-translationally, binds 2 heme c groups covalently per subunit.

It is found in the periplasm. Its function is as follows. Diheme, high potential cytochrome c. This chain is Cytochrome c-552 (cyc1), found in Acidithiobacillus ferridurans.